The chain runs to 320 residues: L-lactate dehydrogenase 1 (320 aa).

Residues Val-18, Asp-39, Arg-44, Tyr-69, and 83-84 (GA) each bind NAD(+). The substrate site is built by Gln-86 and Arg-92. Residues Ser-105, 122–124 (AAN), and Ser-147 contribute to the NAD(+) site. 124-127 (NPVD) contacts substrate. 152–155 (DSSR) contacts substrate. The active-site Proton acceptor is the His-179. Tyr-223 is modified (phosphotyrosine). Position 232 (Thr-232) interacts with substrate.

The protein belongs to the LDH/MDH superfamily. LDH family. Homotetramer.

It localises to the cytoplasm. The catalysed reaction is (S)-lactate + NAD(+) = pyruvate + NADH + H(+). Its pathway is fermentation; pyruvate fermentation to lactate; (S)-lactate from pyruvate: step 1/1. In terms of biological role, catalyzes the conversion of lactate to pyruvate. The chain is L-lactate dehydrogenase 1 from Lactiplantibacillus plantarum (strain ATCC BAA-793 / NCIMB 8826 / WCFS1) (Lactobacillus plantarum).